Reading from the N-terminus, the 563-residue chain is Dihydroxy-acid dehydratase (563 aa).

Residue Asp-78 participates in Mg(2+) binding. Cys-119 is a binding site for [2Fe-2S] cluster. Mg(2+)-binding residues include Asp-120 and Lys-121. Lys-121 carries the N6-carboxylysine modification. Cys-191 is a binding site for [2Fe-2S] cluster. Residue Glu-442 participates in Mg(2+) binding. Ser-468 serves as the catalytic Proton acceptor.

Belongs to the IlvD/Edd family. Homodimer. Requires [2Fe-2S] cluster as cofactor. It depends on Mg(2+) as a cofactor.

It carries out the reaction (2R)-2,3-dihydroxy-3-methylbutanoate = 3-methyl-2-oxobutanoate + H2O. The catalysed reaction is (2R,3R)-2,3-dihydroxy-3-methylpentanoate = (S)-3-methyl-2-oxopentanoate + H2O. The protein operates within amino-acid biosynthesis; L-isoleucine biosynthesis; L-isoleucine from 2-oxobutanoate: step 3/4. It functions in the pathway amino-acid biosynthesis; L-valine biosynthesis; L-valine from pyruvate: step 3/4. Its function is as follows. Functions in the biosynthesis of branched-chain amino acids. Catalyzes the dehydration of (2R,3R)-2,3-dihydroxy-3-methylpentanoate (2,3-dihydroxy-3-methylvalerate) into 2-oxo-3-methylpentanoate (2-oxo-3-methylvalerate) and of (2R)-2,3-dihydroxy-3-methylbutanoate (2,3-dihydroxyisovalerate) into 2-oxo-3-methylbutanoate (2-oxoisovalerate), the penultimate precursor to L-isoleucine and L-valine, respectively. The protein is Dihydroxy-acid dehydratase of Desulfitobacterium hafniense (strain DSM 10664 / DCB-2).